The chain runs to 504 residues: Cytochrome P450 6a9 (504 aa).

Cysteine 449 is a binding site for heme.

The protein belongs to the cytochrome P450 family. Requires heme as cofactor.

It localises to the endoplasmic reticulum membrane. It is found in the microsome membrane. Functionally, involved in the metabolism of insect hormones and in the breakdown of synthetic insecticides. The chain is Cytochrome P450 6a9 (Cyp6a9) from Drosophila melanogaster (Fruit fly).